The chain runs to 146 residues: U1 small nuclear ribonucleoprotein C (146 aa).

The segment at 4–36 adopts a Matrin-type zinc-finger fold; that stretch reads YYCDYCDTYLTHDSPSVRKTHCTGRKHRDNVKF. The interval 64 to 96 is disordered; it reads NNPFAGGPSSAPPKPSGVSIPPPNMGAPPRPGM. Over residues 73–96 the composition is skewed to pro residues; sequence SAPPKPSGVSIPPPNMGAPPRPGM.

It belongs to the U1 small nuclear ribonucleoprotein C family. U1 snRNP is composed of the 7 core Sm proteins B/B', D1, D2, D3, E, F and G that assemble in a heptameric protein ring on the Sm site of the small nuclear RNA to form the core snRNP, and at least 3 U1 snRNP-specific proteins U1-70K, U1-A and U1-C. U1-C interacts with U1 snRNA and the 5' splice-site region of the pre-mRNA.

The protein resides in the nucleus. Its function is as follows. Component of the spliceosomal U1 snRNP, which is essential for recognition of the pre-mRNA 5' splice-site and the subsequent assembly of the spliceosome. U1-C is directly involved in initial 5' splice-site recognition for both constitutive and regulated alternative splicing. The interaction with the 5' splice-site seems to precede base-pairing between the pre-mRNA and the U1 snRNA. Stimulates commitment or early (E) complex formation by stabilizing the base pairing of the 5' end of the U1 snRNA and the 5' splice-site region. This Drosophila pseudoobscura pseudoobscura (Fruit fly) protein is U1 small nuclear ribonucleoprotein C.